Here is a 368-residue protein sequence, read N- to C-terminus: Anhydro-N-acetylmuramic acid kinase (368 aa).

13–20 (GTSLDGVD) is an ATP binding site.

It belongs to the anhydro-N-acetylmuramic acid kinase family.

It carries out the reaction 1,6-anhydro-N-acetyl-beta-muramate + ATP + H2O = N-acetyl-D-muramate 6-phosphate + ADP + H(+). The protein operates within amino-sugar metabolism; 1,6-anhydro-N-acetylmuramate degradation. It participates in cell wall biogenesis; peptidoglycan recycling. Catalyzes the specific phosphorylation of 1,6-anhydro-N-acetylmuramic acid (anhMurNAc) with the simultaneous cleavage of the 1,6-anhydro ring, generating MurNAc-6-P. Is required for the utilization of anhMurNAc either imported from the medium or derived from its own cell wall murein, and thus plays a role in cell wall recycling. The sequence is that of Anhydro-N-acetylmuramic acid kinase from Hahella chejuensis (strain KCTC 2396).